A 296-amino-acid polypeptide reads, in one-letter code: 4-diphosphocytidyl-2-C-methyl-D-erythritol kinase (296 aa).

K19 is a catalytic residue. Residue 102-112 (PMGAGLGGGSS) participates in ATP binding. Residue D144 is part of the active site.

This sequence belongs to the GHMP kinase family. IspE subfamily.

The enzyme catalyses 4-CDP-2-C-methyl-D-erythritol + ATP = 4-CDP-2-C-methyl-D-erythritol 2-phosphate + ADP + H(+). Its pathway is isoprenoid biosynthesis; isopentenyl diphosphate biosynthesis via DXP pathway; isopentenyl diphosphate from 1-deoxy-D-xylulose 5-phosphate: step 3/6. In terms of biological role, catalyzes the phosphorylation of the position 2 hydroxy group of 4-diphosphocytidyl-2C-methyl-D-erythritol. The protein is 4-diphosphocytidyl-2-C-methyl-D-erythritol kinase of Burkholderia pseudomallei (strain 1710b).